The following is a 425-amino-acid chain: UPF0761 membrane protein PXO_04555 (425 aa).

6 helical membrane passes run 48–68 (VFAL…FPAF), 105–125 (FTVA…HSIE), 154–174 (GTML…LPLF), 182–202 (LAEF…IVLI), 219–239 (GALL…VYLG), and 250–270 (ALSA…SVLL).

It belongs to the UPF0761 family.

It localises to the cell inner membrane. The chain is UPF0761 membrane protein PXO_04555 from Xanthomonas oryzae pv. oryzae (strain PXO99A).